The sequence spans 409 residues: Arginine deiminase (409 aa).

Cys-399 serves as the catalytic Amidino-cysteine intermediate.

This sequence belongs to the arginine deiminase family.

The protein resides in the cytoplasm. The catalysed reaction is L-arginine + H2O = L-citrulline + NH4(+). Its pathway is amino-acid degradation; L-arginine degradation via ADI pathway; carbamoyl phosphate from L-arginine: step 1/2. This Latilactobacillus sakei (Lactobacillus sakei) protein is Arginine deiminase (arcA).